Here is a 315-residue protein sequence, read N- to C-terminus: MSDSLRIIFAGTPDFAARHLDALLTSGHNIVGVFTQPDRPAGRGKKLMPSPVKVLAEEKGLPVFQPVSLRPQENQHLVADLHADVMVVVAYGLILPKAVLDMPRLGCINVHGSLLPRWRGAAPIQRSLWAGDAETGVTIMQMDVGLDTGDMLYKLACPITAEDTSGSLYNKLAELGPQGLITTLKQLADGTATPEAQNEALVTHAEKLSKEEARIDWSLSAAQLERCIRAFNPWPMSWLEIDGQPVKVWQASVIEDATQSLPGTILAATKQGIQVATGKGILNLLSLQPAGKKAMSAQDLLNSRREWFIPGNRLA.

The segment at 2–189 (SDSLRIIFAG…LITTLKQLAD (188 aa)) is N-terminal domain. 113-116 (SLLP) lines the (6S)-5,6,7,8-tetrahydrofolate pocket. The tract at residues 210–315 (KEEARIDWSL…EWFIPGNRLA (106 aa)) is C-terminal domain.

It belongs to the Fmt family.

The catalysed reaction is L-methionyl-tRNA(fMet) + (6R)-10-formyltetrahydrofolate = N-formyl-L-methionyl-tRNA(fMet) + (6S)-5,6,7,8-tetrahydrofolate + H(+). In terms of biological role, attaches a formyl group to the free amino group of methionyl-tRNA(fMet). The formyl group appears to play a dual role in the initiator identity of N-formylmethionyl-tRNA by promoting its recognition by IF2 and preventing the misappropriation of this tRNA by the elongation apparatus. The protein is Methionyl-tRNA formyltransferase of Salmonella typhi.